The following is a 209-amino-acid chain: Ubiquitin-conjugating enzyme E2 S (209 aa).

The UBC core domain maps to 14-160; the sequence is QTIRQVMREL…ARMMTEIHAQ (147 aa). Cys-98 (glycyl thioester intermediate) is an active-site residue. The disordered stretch occupies residues 165–209; it reads GVGATGDAKDDGGPSTKKHAGLDKKLQDKKKEKLLKEKKRMLKRL. Residues 184-199 show a composition bias toward basic and acidic residues; sequence AGLDKKLQDKKKEKLL. Basic residues predominate over residues 200–209; it reads KEKKRMLKRL.

The protein belongs to the ubiquitin-conjugating enzyme family.

It carries out the reaction S-ubiquitinyl-[E1 ubiquitin-activating enzyme]-L-cysteine + [E2 ubiquitin-conjugating enzyme]-L-cysteine = [E1 ubiquitin-activating enzyme]-L-cysteine + S-ubiquitinyl-[E2 ubiquitin-conjugating enzyme]-L-cysteine.. Its pathway is protein modification; protein ubiquitination. Its function is as follows. Catalyzes the covalent attachment of ubiquitin to other proteins. Acts as an essential factor of the anaphase promoting complex/cyclosome (APC/C), a cell cycle-regulated ubiquitin ligase that controls progression through mitosis. Acts by specifically elongating polyubiquitin chains initiated by the E2 enzyme vih/UbcH10 on APC/C substrates, enhancing the degradation of APC/C substrates by the proteasome and promoting mitotic exit. The sequence is that of Ubiquitin-conjugating enzyme E2 S from Drosophila simulans (Fruit fly).